The chain runs to 672 residues: Putative sodium/calcium exchanger 7 (672 aa).

The signal sequence occupies residues 1–23; it reads MAQPSILFSLTLIFLISIKSCDA. The next 12 membrane-spanning stretches (helical) occupy residues 88–108, 130–150, 164–184, 196–216, 221–241, 451–471, 479–499, 522–542, 551–571, 581–601, 620–640, and 649–669; these read VILI…VSSA, VAGV…GSIA, LGEL…TIIL, IRDL…FVFY, LWMP…VIGA, LTLL…QFFL, PGLW…IMVF, IAWI…LGVV, GLTI…VSVV, AAAI…PFTI, LILF…VQKF, and VLIS…TGVL.

It belongs to the Ca(2+):cation antiporter (CaCA) (TC 2.A.19) family.

It localises to the membrane. The chain is Putative sodium/calcium exchanger 7 (ncx-7) from Caenorhabditis elegans.